The following is a 270-amino-acid chain: Acyl-[acyl-carrier-protein]--UDP-N-acetylglucosamine O-acyltransferase (270 aa).

It belongs to the transferase hexapeptide repeat family. LpxA subfamily. In terms of assembly, homotrimer.

It is found in the cytoplasm. The catalysed reaction is a (3R)-hydroxyacyl-[ACP] + UDP-N-acetyl-alpha-D-glucosamine = a UDP-3-O-[(3R)-3-hydroxyacyl]-N-acetyl-alpha-D-glucosamine + holo-[ACP]. It participates in glycolipid biosynthesis; lipid IV(A) biosynthesis; lipid IV(A) from (3R)-3-hydroxytetradecanoyl-[acyl-carrier-protein] and UDP-N-acetyl-alpha-D-glucosamine: step 1/6. Involved in the biosynthesis of lipid A, a phosphorylated glycolipid that anchors the lipopolysaccharide to the outer membrane of the cell. This is Acyl-[acyl-carrier-protein]--UDP-N-acetylglucosamine O-acyltransferase from Helicobacter acinonychis (strain Sheeba).